Reading from the N-terminus, the 166-residue chain is Putative 4-hydroxy-4-methyl-2-oxoglutarate aldolase 3 (166 aa).

Alanine 2 bears the N-acetylalanine mark. Residues 81–84 (GGNL) and arginine 103 each bind substrate. Aspartate 104 serves as a coordination point for a divalent metal cation.

This sequence belongs to the class II aldolase/RraA-like family. Homotrimer. A divalent metal cation is required as a cofactor.

The enzyme catalyses 4-hydroxy-4-methyl-2-oxoglutarate = 2 pyruvate. It carries out the reaction oxaloacetate + H(+) = pyruvate + CO2. In terms of biological role, catalyzes the aldol cleavage of 4-hydroxy-4-methyl-2-oxoglutarate (HMG) into 2 molecules of pyruvate. Also contains a secondary oxaloacetate (OAA) decarboxylase activity due to the common pyruvate enolate transition state formed following C-C bond cleavage in the retro-aldol and decarboxylation reactions. The protein is Putative 4-hydroxy-4-methyl-2-oxoglutarate aldolase 3 of Arabidopsis thaliana (Mouse-ear cress).